A 626-amino-acid chain; its full sequence is Chaperone protein HtpG (626 aa).

Positions 1-341 (MRKKKFKAES…SEDLSLNISR (341 aa)) are a; substrate-binding. The tract at residues 342–552 (EMLQHDRQLK…DGEVTIEMEK (211 aa)) is b. The interval 553–626 (VLNAMPDSQQ…FTNDICKVMV (74 aa)) is c.

It belongs to the heat shock protein 90 family. Homodimer.

It localises to the cytoplasm. Its function is as follows. Molecular chaperone. Has ATPase activity. The chain is Chaperone protein HtpG from Bacillus velezensis (strain DSM 23117 / BGSC 10A6 / LMG 26770 / FZB42) (Bacillus amyloliquefaciens subsp. plantarum).